Here is a 200-residue protein sequence, read N- to C-terminus: LHFPL tetraspan subfamily member 6 protein (200 aa).

The N-terminal stretch at 1–23 (MASSLTCTGVIWALLSFLSAATS) is a signal peptide. 3 helical membrane passes run 84 to 104 (ICTI…LTAL), 123 to 143 (GIQF…PLGW), and 166 to 186 (IGWA…LCTW).

This sequence belongs to the LHFP family.

The protein localises to the membrane. In Mus musculus (Mouse), this protein is LHFPL tetraspan subfamily member 6 protein.